The primary structure comprises 354 residues: Inactive ADP-ribosyltransferase ARH2 (354 aa).

Residue Ser27 is modified to Phosphoserine.

This sequence belongs to the ADP-ribosylglycohydrolase family.

Its subcellular location is the cytoplasm. It localises to the myofibril. The protein localises to the sarcomere. Its function is as follows. Required for myofibril assembly and outgrowth of the cardiac chambers in the developing heart. Appears to be catalytically inactive, showing no activity against O-acetyl-ADP-ribose. In Homo sapiens (Human), this protein is Inactive ADP-ribosyltransferase ARH2 (ADPRHL1).